Consider the following 455-residue polypeptide: Bifunctional protein GlmU (455 aa).

The segment at 1–230 (MANRFAVILA…FDETIGINDR (230 aa)) is pyrophosphorylase. UDP-N-acetyl-alpha-D-glucosamine-binding positions include 9–12 (LAAG), lysine 23, glutamine 73, and 78–79 (GT). Aspartate 103 contributes to the Mg(2+) binding site. 4 residues coordinate UDP-N-acetyl-alpha-D-glucosamine: glycine 140, glutamate 155, asparagine 170, and asparagine 228. Asparagine 228 lines the Mg(2+) pocket. A linker region spans residues 231–251 (IALAEAEKIMKKRINEQHMRN). The N-acetyltransferase stretch occupies residues 252–455 (GVSIIDPEQT…KEEYASKFKK (204 aa)). UDP-N-acetyl-alpha-D-glucosamine contacts are provided by arginine 333 and lysine 351. Histidine 363 serves as the catalytic Proton acceptor. UDP-N-acetyl-alpha-D-glucosamine-binding residues include tyrosine 366 and asparagine 377. Acetyl-CoA contacts are provided by residues 386–387 (NY), alanine 423, and arginine 440.

The protein in the N-terminal section; belongs to the N-acetylglucosamine-1-phosphate uridyltransferase family. It in the C-terminal section; belongs to the transferase hexapeptide repeat family. In terms of assembly, homotrimer. Mg(2+) is required as a cofactor.

The protein resides in the cytoplasm. It carries out the reaction alpha-D-glucosamine 1-phosphate + acetyl-CoA = N-acetyl-alpha-D-glucosamine 1-phosphate + CoA + H(+). The enzyme catalyses N-acetyl-alpha-D-glucosamine 1-phosphate + UTP + H(+) = UDP-N-acetyl-alpha-D-glucosamine + diphosphate. Its pathway is nucleotide-sugar biosynthesis; UDP-N-acetyl-alpha-D-glucosamine biosynthesis; N-acetyl-alpha-D-glucosamine 1-phosphate from alpha-D-glucosamine 6-phosphate (route II): step 2/2. It functions in the pathway nucleotide-sugar biosynthesis; UDP-N-acetyl-alpha-D-glucosamine biosynthesis; UDP-N-acetyl-alpha-D-glucosamine from N-acetyl-alpha-D-glucosamine 1-phosphate: step 1/1. It participates in bacterial outer membrane biogenesis; LPS lipid A biosynthesis. In terms of biological role, catalyzes the last two sequential reactions in the de novo biosynthetic pathway for UDP-N-acetylglucosamine (UDP-GlcNAc). The C-terminal domain catalyzes the transfer of acetyl group from acetyl coenzyme A to glucosamine-1-phosphate (GlcN-1-P) to produce N-acetylglucosamine-1-phosphate (GlcNAc-1-P), which is converted into UDP-GlcNAc by the transfer of uridine 5-monophosphate (from uridine 5-triphosphate), a reaction catalyzed by the N-terminal domain. This chain is Bifunctional protein GlmU, found in Oceanobacillus iheyensis (strain DSM 14371 / CIP 107618 / JCM 11309 / KCTC 3954 / HTE831).